The sequence spans 79 residues: MKTLLLTLVVVTIVCLDLGNSLKCYDKLKKEVTCPEGMKFCHKDVLPATHGNSVLVMGCTYSCGLGPRNMCCSTDLCNK.

An N-terminal signal peptide occupies residues methionine 1 to serine 21. 4 disulfides stabilise this stretch: cysteine 24–cysteine 41, cysteine 34–cysteine 59, cysteine 63–cysteine 71, and cysteine 72–cysteine 77.

The protein belongs to the three-finger toxin family. Short-chain subfamily. In terms of tissue distribution, expressed by the venom gland.

The protein localises to the secreted. Functionally, snake venom neurotoxin that blocks neuromuscular transmission, presenting a postsynaptic action through the nicotinic acetylcholine receptor (nAChR). Has no cytotoxic activity. The polypeptide is Mipartoxin-3 (Micrurus mipartitus (Red-tailed coral snake)).